The sequence spans 452 residues: GTPase Der (452 aa).

EngA-type G domains lie at 9-170 (KIIA…PEED) and 185-362 (LQIV…KTWN). GTP-binding positions include 15 to 22 (GRPNVGKS), 62 to 66 (DTPGL), 124 to 127 (NKCE), 191 to 198 (GRPNAGKS), 238 to 242 (DTAGL), and 303 to 306 (NKWD). The 86-residue stretch at 363–448 (KKITTSKLNE…PIRFNYIKTK (86 aa)) folds into the KH-like domain.

The protein belongs to the TRAFAC class TrmE-Era-EngA-EngB-Septin-like GTPase superfamily. EngA (Der) GTPase family. As to quaternary structure, associates with the 50S ribosomal subunit.

Its function is as follows. GTPase that plays an essential role in the late steps of ribosome biogenesis. The protein is GTPase Der of Rickettsia bellii (strain RML369-C).